A 473-amino-acid polypeptide reads, in one-letter code: H(+)/Cl(-) exchange transporter ClcA (473 aa).

Residues 1-32 (MKTDTSTFLAQQIVRLRRRDQIRRLMQRDKTP) are Cytoplasmic-facing. The helical transmembrane segment at 33–69 (LAILLMAAVVGTLTGLVGVAFEKAVSWVQNMRIGALV) threads the bilayer. The Periplasmic portion of the chain corresponds to 70–76 (QVADHAF). Residues 77–100 (LLWPLAFILSALLAMVGYFLVRKF) form a helical membrane-spanning segment. Positions 106 to 110 (GSGIP) match the Selectivity filter part_1 motif. Serine 107 serves as a coordination point for chloride. Residues 109-116 (IPEIEGAL) constitute an intramembrane region (helical). The Cytoplasmic segment spans residues 117-123 (EELRPVR). 2 consecutive transmembrane segments (helical) span residues 124–141 (WWRV…TLGA) and 148–166 (EGPT…LDVF). A Selectivity filter part_2 motif is present at residues 146–150 (GREGP). The Cytoplasmic portion of the chain corresponds to 167–176 (RMRSAEARHT). 2 intramembrane regions (helical) span residues 177–189 (LLAT…LSAA) and 193–201 (PLAGILFII). The Cytoplasmic portion of the chain corresponds to 202 to 214 (EEMRPQFRYNLIS). Residues 215 to 232 (IKAVFTGVIMSSIVFRIF) traverse the membrane as a helical segment. The Periplasmic segment spans residues 233–252 (NGEAPIIEVGKLSDAPVNTL). The chain crosses the membrane as a helical span at residues 253–281 (WLYLILGIIFGCVGPVFNSLVLRTQDMFQ). The Cytoplasmic portion of the chain corresponds to 282–287 (RFHGGE). The chain crosses the membrane as a helical span at residues 288 to 309 (IKKWVLMGGAIGGLCGILGLIE). Residues 310 to 329 (PEAAGGGFNLIPIAAAGNFS) lie on the Periplasmic side of the membrane. Transmembrane regions (helical) follow at residues 330–349 (VGLL…LCFS) and 355–376 (GIFA…MAAA). The Selectivity filter part_3 signature appears at 355–359 (GIFAP). Residues isoleucine 356 and phenylalanine 357 each contribute to the chloride site. Topologically, residues 377–386 (VLFPQYHLEA) are periplasmic. The segment at residues 387 to 401 (GTFAIAGMGALMAAS) is an intramembrane region (helical). Residues 402-404 (VRA) constitute an intramembrane region (note=Loop between two helices). The helical intramembrane region spans 405–416 (PLTGIVLVLEMT). Positions 417–421 (DNYQL) form an intramembrane region, note=Loop between two helices. A helical membrane pass occupies residues 422–438 (ILPMIITCLGATLLAQF). Over 439-473 (LGGKPLYSTILARTLAKQDAEQAAKNQNAPAGENT) the chain is Cytoplasmic. Residue tyrosine 445 coordinates chloride.

It belongs to the chloride channel (TC 2.A.49) family. ClcA subfamily. Homodimer.

The protein resides in the cell inner membrane. It catalyses the reaction 2 chloride(in) + H(+)(out) = 2 chloride(out) + H(+)(in). Its function is as follows. Proton-coupled chloride transporter. Functions as antiport system and exchanges two chloride ions for 1 proton. Probably acts as an electrical shunt for an outwardly-directed proton pump that is linked to amino acid decarboxylation, as part of the extreme acid resistance (XAR) response. The sequence is that of H(+)/Cl(-) exchange transporter ClcA from Salmonella newport (strain SL254).